A 350-amino-acid chain; its full sequence is 4-hydroxy-3-methylbut-2-enyl diphosphate reductase (350 aa).

Cys-19 serves as a coordination point for [4Fe-4S] cluster. (2E)-4-hydroxy-3-methylbut-2-enyl diphosphate-binding residues include His-48 and His-84. Dimethylallyl diphosphate-binding residues include His-48 and His-84. Isopentenyl diphosphate is bound by residues His-48 and His-84. Cys-106 contributes to the [4Fe-4S] cluster binding site. His-134 provides a ligand contact to (2E)-4-hydroxy-3-methylbut-2-enyl diphosphate. His-134 is a dimethylallyl diphosphate binding site. His-134 contacts isopentenyl diphosphate. Glu-136 (proton donor) is an active-site residue. A (2E)-4-hydroxy-3-methylbut-2-enyl diphosphate-binding site is contributed by Thr-175. Residue Cys-205 coordinates [4Fe-4S] cluster. (2E)-4-hydroxy-3-methylbut-2-enyl diphosphate-binding residues include Ser-233, Ser-234, Asn-235, and Ser-278. Positions 233, 234, 235, and 278 each coordinate dimethylallyl diphosphate. The isopentenyl diphosphate site is built by Ser-233, Ser-234, Asn-235, and Ser-278.

This sequence belongs to the IspH family. The cofactor is [4Fe-4S] cluster.

It carries out the reaction isopentenyl diphosphate + 2 oxidized [2Fe-2S]-[ferredoxin] + H2O = (2E)-4-hydroxy-3-methylbut-2-enyl diphosphate + 2 reduced [2Fe-2S]-[ferredoxin] + 2 H(+). The catalysed reaction is dimethylallyl diphosphate + 2 oxidized [2Fe-2S]-[ferredoxin] + H2O = (2E)-4-hydroxy-3-methylbut-2-enyl diphosphate + 2 reduced [2Fe-2S]-[ferredoxin] + 2 H(+). The protein operates within isoprenoid biosynthesis; dimethylallyl diphosphate biosynthesis; dimethylallyl diphosphate from (2E)-4-hydroxy-3-methylbutenyl diphosphate: step 1/1. It functions in the pathway isoprenoid biosynthesis; isopentenyl diphosphate biosynthesis via DXP pathway; isopentenyl diphosphate from 1-deoxy-D-xylulose 5-phosphate: step 6/6. Catalyzes the conversion of 1-hydroxy-2-methyl-2-(E)-butenyl 4-diphosphate (HMBPP) into a mixture of isopentenyl diphosphate (IPP) and dimethylallyl diphosphate (DMAPP). Acts in the terminal step of the DOXP/MEP pathway for isoprenoid precursor biosynthesis. This Brucella anthropi (strain ATCC 49188 / DSM 6882 / CCUG 24695 / JCM 21032 / LMG 3331 / NBRC 15819 / NCTC 12168 / Alc 37) (Ochrobactrum anthropi) protein is 4-hydroxy-3-methylbut-2-enyl diphosphate reductase.